Here is a 1452-residue protein sequence, read N- to C-terminus: Arf-GAP with Rho-GAP domain, ANK repeat and PH domain-containing protein 1 (1452 aa).

Residues 6 to 70 (DAALSVAEWL…LAGLHRAHAP (65 aa)) form the SAM domain. A required for interaction with SH3KBP1 region spans residues 81-90 (PVPMKRHIFR). Disordered regions lie at residues 87 to 258 (HIFR…LPSR) and 271 to 304 (EGEE…LNPP). Composition is skewed to pro residues over residues 92-104 (PPVP…PPPT), 154-167 (SVPP…PPYP), and 205-225 (PLQP…PPRL). 2 stretches are compositionally biased toward acidic residues: residues 228 to 239 (EFDDSDYDDVPE) and 271 to 286 (EGEE…DDDH). Serine 232 is subject to Phosphoserine. Position 234 is a phosphotyrosine; by PTK6 (tyrosine 234). The PH 1 domain maps to 329–421 (PVIKAGWLDK…WMQALQQAVV (93 aa)). Phosphoserine is present on serine 430. The 90-residue stretch at 442 to 531 (QPDRAGSLEL…WLEAMQGAIA (90 aa)) folds into the PH 2 domain. Tyrosine 506 carries the phosphotyrosine modification. An Arf-GAP domain is found at 537–662 (SEVAERIWAA…RYHPLFGNQE (126 aa)). The C4-type zinc-finger motif lies at 552–575 (CADCGAAQPDWASINLCVVICKRC). Residue serine 740 is modified to Phosphoserine. In terms of domain architecture, PH 3 spans 745 to 852 (TVSHSGFLYK…WVKCIAKAFV (108 aa)). The 186-residue stretch at 956–1141 (ASLGDTLSEQ…DLINHYVVVF (186 aa)) folds into the Rho-GAP domain. The Ras-associating domain occupies 1174-1263 (GDFICTVYLE…SHLVVKKYQS (90 aa)). The PH 4 domain occupies 1276–1398 (GDTKHGMMKF…WFATFLSVQH (123 aa)). 2 positions are modified to phosphoserine: serine 1430 and serine 1437.

As to quaternary structure, interacts with SH3KBP1/CIN85 (via SH3 domains). The interaction is independent of EGF and does not affect ARAP1 GTPase-activating activity but is involved in regulating ubiquitination and endocytic trafficking of EGFR. ARAP1 competes with E3 ubiquitin-protein ligase CBL for binding to SH3KBP1, preventing interaction of CBL with SH3KBP1; this is likely to regulate SH3KBP1-mediated internalization of EGFR. Interacts with TNFRSF10A. In terms of processing, phosphorylated by PTK6 following EGF stimulation which enhances EGFR signaling by delaying EGFR down-regulation; the interaction is mediated by the SH2 domain of PTK6. Phosphorylation promotes association with the Golgi apparatus and endosomes. As to expression, expressed in the retina where it is detected in Mueller glia (at protein level). Also detected in the retinal pigment epithelium (at protein level). Expressed in osteoclasts (at protein level).

The protein resides in the cytoplasm. It is found in the golgi apparatus. The protein localises to the trans-Golgi network. Its subcellular location is the golgi stack membrane. It localises to the cell membrane. The protein resides in the endosome. It is found in the multivesicular body. The protein localises to the cell projection. Its subcellular location is the ruffle. It localises to the podosome. The protein resides in the early endosome. Functionally, phosphatidylinositol 3,4,5-trisphosphate-dependent GTPase-activating protein that modulates actin cytoskeleton remodeling by regulating ARF and RHO family members. Activated by phosphatidylinositol 3,4,5-trisphosphate (PtdIns(3,4,5)P3) binding and, to a lesser extent, by phosphatidylinositol 3,4-bisphosphate (PtdIns(3,4)P2) binding. Has a preference for ARF1 and ARF5. Positively regulates the ring size of circular dorsal ruffles and promotes macropinocytosis. Acts as a bridging factor in osteoclasts to control actin and membrane dynamics. Regulates the condensing of osteoclast podosomes into sealing zones which segregate the bone-facing membrane from other membrane domains and are required for osteoclast resorption activity. Also regulates recruitment of the AP-3 complex to endosomal membranes and trafficking of lysosomal membrane proteins to the ruffled membrane border of osteoclasts to modulate bone resorption. Regulates the endocytic trafficking of EGFR. Regulates the incorporation of CD63 and CD9 into multivesicular bodies. Required in the retinal pigment epithelium (RPE) for photoreceptor survival due to its role in promoting RPE phagocytosis. The sequence is that of Arf-GAP with Rho-GAP domain, ANK repeat and PH domain-containing protein 1 from Mus musculus (Mouse).